Consider the following 342-residue polypeptide: Succinylglutamate desuccinylase (342 aa).

3 residues coordinate Zn(2+): His-63, Glu-66, and His-155. Glu-219 is a catalytic residue.

This sequence belongs to the AspA/AstE family. Succinylglutamate desuccinylase subfamily. It depends on Zn(2+) as a cofactor.

It catalyses the reaction N-succinyl-L-glutamate + H2O = L-glutamate + succinate. It participates in amino-acid degradation; L-arginine degradation via AST pathway; L-glutamate and succinate from L-arginine: step 5/5. In terms of biological role, transforms N(2)-succinylglutamate into succinate and glutamate. This is Succinylglutamate desuccinylase from Vibrio campbellii (strain ATCC BAA-1116).